Consider the following 345-residue polypeptide: Uroporphyrinogen decarboxylase (345 aa).

Substrate-binding positions include 28-32, Asp-77, Tyr-153, Ser-208, and His-322; that span reads RQAGR.

It belongs to the uroporphyrinogen decarboxylase family. Homodimer.

The protein localises to the cytoplasm. The catalysed reaction is uroporphyrinogen III + 4 H(+) = coproporphyrinogen III + 4 CO2. The protein operates within porphyrin-containing compound metabolism; protoporphyrin-IX biosynthesis; coproporphyrinogen-III from 5-aminolevulinate: step 4/4. Catalyzes the decarboxylation of four acetate groups of uroporphyrinogen-III to yield coproporphyrinogen-III. The polypeptide is Uroporphyrinogen decarboxylase (Solibacter usitatus (strain Ellin6076)).